We begin with the raw amino-acid sequence, 1499 residues long: DENN domain-containing protein 4B (1499 aa).

A disordered region spans residues 26–45 (PEEKWVPEPTGPLRPPRPAE). Positions 34 to 44 (PTGPLRPPRPA) are enriched in pro residues. Positions 44 to 203 (AEPITDVAVI…AVYLCYKVGL (160 aa)) constitute an MABP domain. The uDENN domain maps to 195-369 (VYLCYKVGLA…NVPFPSPQRP (175 aa)). One can recognise a cDENN domain in the interval 390-526 (PLPLSGASFL…PYKLLLATLT (137 aa)). Positions 528-644 (LYQQLDQTYT…ECSFGSARHA (117 aa)) constitute a dDENN domain. The segment at 717 to 744 (PQEQQGALPVPGPSRSAPSSPAPRRTKQ) is disordered. Over residues 729 to 739 (PSRSAPSSPAP) the composition is skewed to low complexity. 2 PPR repeats span residues 775-811 (WFLC…VVLP) and 812-846 (DEVC…GIVP). 3 disordered regions span residues 890-968 (PLKD…ARGT), 988-1115 (PRGS…SLGS), and 1204-1226 (RPSA…APAP). Low complexity predominate over residues 897-915 (QQQQQQQQQQQKQQVAEQQ). Positions 933-942 (RPLQRQTTWA) are enriched in polar residues. S951 bears the Phosphoserine mark. The span at 1074–1083 (IPPPELPSDL) shows a compositional bias: pro residues. S1090 is modified (phosphoserine). Positions 1103–1115 (GSTASESSASLGS) are enriched in low complexity.

Its subcellular location is the golgi apparatus. Functionally, guanine nucleotide exchange factor (GEF) which may activate RAB10. Promotes the exchange of GDP to GTP, converting inactive GDP-bound Rab proteins into their active GTP-bound form. In Mus musculus (Mouse), this protein is DENN domain-containing protein 4B (Dennd4b).